We begin with the raw amino-acid sequence, 176 residues long: Transcriptional repressor MprA (176 aa).

In terms of domain architecture, HTH marR-type spans 26 to 160 (EILLTRLCMH…LEQITRKLLS (135 aa)).

Functionally, negative regulator of the multidrug operon emrAB. This chain is Transcriptional repressor MprA (mprA), found in Escherichia coli O157:H7.